The following is a 268-amino-acid chain: Putative cysteine-rich repeat secretory protein 5 (268 aa).

Positions 1–24 (MTGINTHFAVALFCFFSFSLRAMS) are cleaved as a signal peptide. 2 Gnk2-homologous domains span residues 27–129 (SQML…NVSF) and 135–248 (DVPS…ISAL).

This sequence belongs to the cysteine-rich repeat secretory protein family.

The protein localises to the secreted. The sequence is that of Putative cysteine-rich repeat secretory protein 5 (CRRSP5) from Arabidopsis thaliana (Mouse-ear cress).